A 163-amino-acid polypeptide reads, in one-letter code: Large ribosomal subunit protein uL10 (163 aa).

The protein belongs to the universal ribosomal protein uL10 family. As to quaternary structure, part of the ribosomal stalk of the 50S ribosomal subunit. The N-terminus interacts with L11 and the large rRNA to form the base of the stalk. The C-terminus forms an elongated spine to which L12 dimers bind in a sequential fashion forming a multimeric L10(L12)X complex.

In terms of biological role, forms part of the ribosomal stalk, playing a central role in the interaction of the ribosome with GTP-bound translation factors. The polypeptide is Large ribosomal subunit protein uL10 (Haemophilus ducreyi (strain 35000HP / ATCC 700724)).